The sequence spans 66 residues: Large ribosomal subunit protein bL35 (66 aa).

This sequence belongs to the bacterial ribosomal protein bL35 family.

This Phenylobacterium zucineum (strain HLK1) protein is Large ribosomal subunit protein bL35.